Reading from the N-terminus, the 97-residue chain is NADH-ubiquinone oxidoreductase chain 4L (97 aa).

The next 3 membrane-spanning stretches (helical) occupy residues 1–21, 25–45, and 57–77; these read MSYLILSIVILLIGILGIILN, LIIMLMCVELVLLASTILLLF, and IFAIVILTVAAAESAIGLAIM.

Belongs to the complex I subunit 4L family.

Its subcellular location is the mitochondrion membrane. It carries out the reaction a ubiquinone + NADH + 5 H(+)(in) = a ubiquinol + NAD(+) + 4 H(+)(out). Functionally, core subunit of the mitochondrial membrane respiratory chain NADH dehydrogenase (Complex I) that is believed to belong to the minimal assembly required for catalysis. Complex I functions in the transfer of electrons from NADH to the respiratory chain. The immediate electron acceptor for the enzyme is believed to be ubiquinone. This chain is NADH-ubiquinone oxidoreductase chain 4L (ND4L), found in Sarcophyton glaucum (Toadstool umbrella leather coral).